Consider the following 416-residue polypeptide: Phosphoglycerate kinase (416 aa).

Positions 23, 24, 25, 26, 39, 62, 63, 65, 66, 121, 122, 169, and 170 each coordinate (2R)-3-phosphoglycerate. G213 contributes to the ADP binding site. Residue G213 coordinates CDP. Positions 214 and 215 each coordinate AMP. An ATP-binding site is contributed by A214. Position 214 (A214) interacts with Mg(2+). D218 provides a ligand contact to CDP. D218 serves as a coordination point for Mg(2+). K219 contacts AMP. K219 is a binding site for ATP. G237 is an ADP binding site. Position 237 (G237) interacts with CDP. Positions 238 and 312 each coordinate AMP. Residues G238 and G312 each coordinate ATP. The CDP site is built by G337 and F342. Residue F342 coordinates ADP. E343 is an AMP binding site. The ATP site is built by E343, D374, and T375. D374 contributes to the Mg(2+) binding site.

The protein belongs to the phosphoglycerate kinase family. As to quaternary structure, monomer. Mg(2+) serves as cofactor.

The protein resides in the cytoplasm. It is found in the mitochondrion. The catalysed reaction is (2R)-3-phosphoglycerate + ATP = (2R)-3-phospho-glyceroyl phosphate + ADP. Its pathway is carbohydrate degradation; glycolysis; pyruvate from D-glyceraldehyde 3-phosphate: step 2/5. In terms of biological role, catalyzes one of the two ATP producing reactions in the glycolytic pathway via the reversible conversion of 1,3-diphosphoglycerate to 3-phosphoglycerate. Both L- and D- forms of purine and pyrimidine nucleotides can be used as substrates, but the activity is much lower on pyrimidines. Negatively regulates the biosynthesis of acetyl-CoA from pyruvate in the mitochondrion. This Agaricus bisporus (White button mushroom) protein is Phosphoglycerate kinase (pgkA).